A 375-amino-acid polypeptide reads, in one-letter code: Succinyl-diaminopimelate desuccinylase (375 aa).

Histidine 75 lines the Zn(2+) pocket. The active site involves aspartate 77. Aspartate 106 is a Zn(2+) binding site. Glutamate 136 functions as the Proton acceptor in the catalytic mechanism. Glutamate 137, glutamate 165, and histidine 348 together coordinate Zn(2+).

This sequence belongs to the peptidase M20A family. DapE subfamily. In terms of assembly, homodimer. Zn(2+) is required as a cofactor. Co(2+) serves as cofactor.

The catalysed reaction is N-succinyl-(2S,6S)-2,6-diaminopimelate + H2O = (2S,6S)-2,6-diaminopimelate + succinate. The protein operates within amino-acid biosynthesis; L-lysine biosynthesis via DAP pathway; LL-2,6-diaminopimelate from (S)-tetrahydrodipicolinate (succinylase route): step 3/3. In terms of biological role, catalyzes the hydrolysis of N-succinyl-L,L-diaminopimelic acid (SDAP), forming succinate and LL-2,6-diaminopimelate (DAP), an intermediate involved in the bacterial biosynthesis of lysine and meso-diaminopimelic acid, an essential component of bacterial cell walls. The chain is Succinyl-diaminopimelate desuccinylase from Novosphingobium aromaticivorans (strain ATCC 700278 / DSM 12444 / CCUG 56034 / CIP 105152 / NBRC 16084 / F199).